The primary structure comprises 392 residues: MSFVEAKRIRNLPPYLFARIEQLIADKKAQGVDVISLGIGDPDVPTPDHIIEAAEKELKIPANHQYPSSAGMPAYRRAVADWYARRFGVELDPQREVVSLIGSKEGIAHLPWCFVDPGDVVLVPDPGYPVYAGGTILAGGIPHPVPLTAGNGFLPDLAAIPAETARRAKVMFINYPNNPTGAVASKEFFARVVDFAREYGILVCHDAAYSEIAFDGYRPPSFLEVAGAREVGIEFHSVSKTYNMTGWRAGWAAGNAGAVEALGRLKSNLDSGVFQVVQYAAIAALNGPQDGVQSLCEMYRERRDLVVDTLNDLGWRLTRPRATFYIWAPVPAGHDASSFAEMVLEKAGVVITPGTGYGTYGEGYFRISLTLPTPRLVEAMERLRGCLGRVTF.

5 residues coordinate substrate: Y15, G40, K104, Y128, and N178. Pyridoxal 5'-phosphate is bound by residues 103 to 104 (SK), Y128, N178, Y209, and 237 to 239 (SVS). At K240 the chain carries N6-(pyridoxal phosphate)lysine. Pyridoxal 5'-phosphate is bound at residue R248. R366 provides a ligand contact to substrate.

Belongs to the class-I pyridoxal-phosphate-dependent aminotransferase family. LL-diaminopimelate aminotransferase subfamily. As to quaternary structure, homodimer. Requires pyridoxal 5'-phosphate as cofactor.

The enzyme catalyses (2S,6S)-2,6-diaminopimelate + 2-oxoglutarate = (S)-2,3,4,5-tetrahydrodipicolinate + L-glutamate + H2O + H(+). Its pathway is amino-acid biosynthesis; L-lysine biosynthesis via DAP pathway; LL-2,6-diaminopimelate from (S)-tetrahydrodipicolinate (aminotransferase route): step 1/1. Its function is as follows. Involved in the synthesis of meso-diaminopimelate (m-DAP or DL-DAP), required for both lysine and peptidoglycan biosynthesis. Catalyzes the direct conversion of tetrahydrodipicolinate to LL-diaminopimelate. This is LL-diaminopimelate aminotransferase from Desulforudis audaxviator (strain MP104C).